Consider the following 534-residue polypeptide: Peptide chain release factor 3 (534 aa).

Residues 9–278 (ARRRTFAIIS…FFVEHAPSPQ (270 aa)) enclose the tr-type G domain. GTP is bound by residues 18–25 (SHPDAGKT), 86–90 (DTPGH), and 140–143 (NKLD).

The protein belongs to the TRAFAC class translation factor GTPase superfamily. Classic translation factor GTPase family. PrfC subfamily.

It localises to the cytoplasm. In terms of biological role, increases the formation of ribosomal termination complexes and stimulates activities of RF-1 and RF-2. It binds guanine nucleotides and has strong preference for UGA stop codons. It may interact directly with the ribosome. The stimulation of RF-1 and RF-2 is significantly reduced by GTP and GDP, but not by GMP. The sequence is that of Peptide chain release factor 3 from Xylella fastidiosa (strain M23).